Reading from the N-terminus, the 277-residue chain is MGRITQHLQVPRVVSTETKVFVNTRPDTIAVEEPLEIRVNGTNLTTTMRTPGHDIELVHGLLLAEGLIRDASEVSTARYCAGAVGPDNQNTYNVLELDVVPANPRRELNLVSVQRNLPTSSACGVCGTTSIEQLMDKKGWPIEPITPDPRMIITLPEKLRERQKMFDKTGGVHAAGLATLDGELLVVREDVGRHNAADKVIGHMLMNGRLPLRDTILVMSSRASFELVQKAAMAGIPGVIAVGAATSLAVDTARDAGMFLAGFVRGNKFNHYAGELG.

Cys-123 (cysteine persulfide intermediate) is an active-site residue. 263–268 (FVRGNK) is a binding site for Mo-bis(molybdopterin guanine dinucleotide).

This sequence belongs to the FdhD family.

Its subcellular location is the cytoplasm. Functionally, required for formate dehydrogenase (FDH) activity. Acts as a sulfur carrier protein that transfers sulfur from IscS to the molybdenum cofactor prior to its insertion into FDH. The chain is Sulfur carrier protein FdhD from Corynebacterium efficiens (strain DSM 44549 / YS-314 / AJ 12310 / JCM 11189 / NBRC 100395).